The primary structure comprises 340 residues: HTH-type transcriptional regulator PtxS (340 aa).

Positions 12-67 (VTINQVAEAAGVSKASVSRYIGGDRQLLADATARRIERAIDQLDYRPNQMARGLKR) constitute an HTH lacI-type domain. A DNA-binding region (H-T-H motif) is located at residues 14–33 (INQVAEAAGVSKASVSRYIG).

In terms of assembly, interacts with PtxR in the absence of 2-ketogluconate. Binding of the 2-ketogluconate effector to PtxS causes PtxS/PtxR complex dissociation.

With respect to regulation, 2-ketogluconate acts as a molecular effector and causes dissociation of the PtxS/PtxR complex. Negatively regulates glucose metabolism by binding directly to the promoter region of the kgu and gad operons. It also negatively regulates its own synthesis. Its function is as follows. In addition, in pathogenic strains, PtxS modulates PtxR activity in response to 2-ketogluconate. In the presence of PtxR, which also binds to the kgu and gad promoter regions, PtxS and PtxR form a tight complex, creating a DNA-loop that prevents RNA polymerase promoter access and expression of the glucose metabolism genes. Binding of the 2-ketogluconate effector to PtxS causes PtxS/PtxR complex dissociation and leads to the dissolution of the repression DNA-loop, facilitating the entry of the RNA polymerase and enabling the transcription of the genes. Also plays an important role in the regulation of the expression of the virulence factor exotoxin A (toxA). PtxS does not bind directly to the toxA promoter but negatively regulates the production of exotoxin A by binding to PtxR and interfering with its positive regulator activity. In the presence of 2-ketogluconate, PtxS is released and PtxR can recruit RNA polymerase. The protein is HTH-type transcriptional regulator PtxS of Pseudomonas aeruginosa (strain ATCC 15692 / DSM 22644 / CIP 104116 / JCM 14847 / LMG 12228 / 1C / PRS 101 / PAO1).